Reading from the N-terminus, the 246-residue chain is Small ribosomal subunit protein uS2 (246 aa).

The protein belongs to the universal ribosomal protein uS2 family. Component of the small ribosomal subunit. Mature ribosomes consist of a small (40S) and a large (60S) subunit. The 40S subunit contains about 33 different proteins and 1 molecule of RNA (18S). The 60S subunit contains about 49 different proteins and 3 molecules of RNA (25S, 5.8S and 5S). Interacts with ribosomal protein S21.

The protein resides in the cytoplasm. In terms of biological role, required for the assembly and/or stability of the 40S ribosomal subunit. Required for the processing of the 20S rRNA-precursor to mature 18S rRNA in a late step of the maturation of 40S ribosomal subunits. The polypeptide is Small ribosomal subunit protein uS2 (Leishmania infantum).